A 196-amino-acid polypeptide reads, in one-letter code: 7-methyl-GTP pyrophosphatase (196 aa).

Aspartate 72 serves as the catalytic Proton acceptor.

The protein belongs to the Maf family. YceF subfamily. It depends on a divalent metal cation as a cofactor.

It localises to the cytoplasm. It catalyses the reaction N(7)-methyl-GTP + H2O = N(7)-methyl-GMP + diphosphate + H(+). Nucleoside triphosphate pyrophosphatase that hydrolyzes 7-methyl-GTP (m(7)GTP). May have a dual role in cell division arrest and in preventing the incorporation of modified nucleotides into cellular nucleic acids. This chain is 7-methyl-GTP pyrophosphatase, found in Neisseria meningitidis serogroup B (strain ATCC BAA-335 / MC58).